The following is a 392-amino-acid chain: Chorismate synthase (392 aa).

2 residues coordinate NADP(+): arginine 39 and arginine 45. FMN is bound by residues 131–133, 255–256, glycine 300, 315–319, and arginine 341; these read RSS, NA, and KPIPT.

This sequence belongs to the chorismate synthase family. In terms of assembly, homotetramer. Requires FMNH2 as cofactor.

The enzyme catalyses 5-O-(1-carboxyvinyl)-3-phosphoshikimate = chorismate + phosphate. It functions in the pathway metabolic intermediate biosynthesis; chorismate biosynthesis; chorismate from D-erythrose 4-phosphate and phosphoenolpyruvate: step 7/7. Catalyzes the anti-1,4-elimination of the C-3 phosphate and the C-6 proR hydrogen from 5-enolpyruvylshikimate-3-phosphate (EPSP) to yield chorismate, which is the branch point compound that serves as the starting substrate for the three terminal pathways of aromatic amino acid biosynthesis. This reaction introduces a second double bond into the aromatic ring system. The chain is Chorismate synthase from Leuconostoc citreum (strain KM20).